Reading from the N-terminus, the 801-residue chain is Glycerol-3-phosphate acyltransferase 2, mitochondrial (801 aa).

Residues 1–24 (METMLKSNPQMQQRNNHSGQETSL) form a disordered region. Residues 1-305 (METMLKSNPQ…PGPRLSALGQ (305 aa)) lie on the Cytoplasmic side of the membrane. Residues 180-290 (QLHKGQMKMV…SGQPLLIFLE (111 aa)) are acyltransferase. The short motif at 205 to 210 (HKSLLD) is the HXXXXD motif element. A helical transmembrane segment spans residues 306–332 (AWLGLVVQAVQAGIVPDATLVPVATAY). Over 333–449 (DLVPDAPCNM…QLLVRRLSRH (117 aa)) the chain is Mitochondrial intermembrane. Residues 450–472 (VLSASVASSAVMSTAIMATLLLL) traverse the membrane as a helical segment. The Cytoplasmic portion of the chain corresponds to 473–795 (KHQKGVVLSQ…DNQDKLEQFI (323 aa)).

The protein belongs to the GPAT/DAPAT family. Interacts with PIWIL2. As to expression, expressed in spermatocytes and spermatides.

Its subcellular location is the mitochondrion outer membrane. The enzyme catalyses sn-glycerol 3-phosphate + an acyl-CoA = a 1-acyl-sn-glycero-3-phosphate + CoA. It catalyses the reaction a 1-acyl-sn-glycero-3-phosphate + an acyl-CoA = a 1,2-diacyl-sn-glycero-3-phosphate + CoA. It carries out the reaction 1-(9Z-octadecenoyl)-sn-glycero-3-phosphate + (9Z)-octadecenoyl-CoA = 1,2-di-(9Z-octadecenoyl)-sn-glycero-3-phosphate + CoA. The catalysed reaction is 1-(9Z-octadecenoyl)-sn-glycero-3-phosphate + (5Z,8Z,11Z,14Z)-eicosatetraenoyl-CoA = 1-(9Z)-octadecenoyl-2-(5Z,8Z,11Z,14Z)-eicosatetraenoyl-sn-glycero-3-phosphate + CoA. The enzyme catalyses (5Z,8Z,11Z,14Z)-eicosatetraenoyl-CoA + sn-glycerol 3-phosphate = 1-(5Z,8Z,11Z,14Z-eicosatetraenoyl)-sn-glycero-3-phosphate + CoA. It functions in the pathway phospholipid metabolism; CDP-diacylglycerol biosynthesis; CDP-diacylglycerol from sn-glycerol 3-phosphate: step 1/3. Its activity is regulated as follows. Inhibited by N-ethylmaleimide (NEM). Its function is as follows. Transfers an acyl-group from acyl-ACP to the sn-1 position of glycerol-3-phosphate producing a lysophosphatidic acid (LPA), an essential step for the triacylglycerol (TAG) and glycerophospholipids. In vitro also transfers an acyl-group from acyl-ACP to the LPA producing a phosphatidic acid (PA). Prefers arachidonoyl-CoA as the acyl donor. Required for primary processing step during piRNA biosynthesis. Molecular mechanisms by which it promotes piRNA biosynthesis are unclear and do not involve its acyltransferase activity. This is Glycerol-3-phosphate acyltransferase 2, mitochondrial from Rattus norvegicus (Rat).